A 266-amino-acid polypeptide reads, in one-letter code: uncharacterized protein (266 aa).

Transmembrane regions (helical) follow at residues 9–29 (IFIIFLSFLMIVLSITSIELP), 79–99 (GIMTCMGINILSLVIILINPF), 122–142 (LSVMIVIFYILSTTIGLMLSG), and 193–213 (GWYLSIVLLFLSLILAVMVFI).

It is found in the membrane. This is an uncharacterized protein from Dictyostelium discoideum (Social amoeba).